We begin with the raw amino-acid sequence, 1528 residues long: Rho GTPase-activating protein 7 (1528 aa).

Disordered stretches follow at residues 72–94, 288–310, and 372–436; these read DFPGRPMGHLSKDVDENDSHEGE, MSAENGLEKSGFSQHQNKSPPKV, and ALST…TKPK. Positions 81–94 are enriched in basic and acidic residues; that stretch reads LSKDVDENDSHEGE. Residues 374–384 show a composition bias toward low complexity; that stretch reads STSSSPSGTPT. Positions 396–436 are enriched in polar residues; the sequence is GSESGADTISVNQTRVNLSSDTESTDLPSSTPVANSGTKPK. Residues 448–515 form the SAM domain; sequence KAEIEAKEAC…LNKCAVMKLE (68 aa). Phosphoserine occurs at positions 523, 526, and 566. Disordered regions lie at residues 558 to 617, 732 to 764, 829 to 876, and 928 to 990; these read PKQD…ATPR, RSVSNSTQTSSSSSQSETSSAVSTPSPVTRTRS, PSGN…SSRL, and SDEG…GVGA. Low complexity-rich tracts occupy residues 591–605 and 734–760; these read VSSVRSLSSTGSLPS and VSNSTQTSSSSSQSETSSAVSTPSPVT. Residues 710–884 form a focal adhesion-targeting (FAT) region; the sequence is QLNCVEISAL…RLSIYDNVPG (175 aa). Serine 757 carries the post-translational modification Phosphoserine. A compositionally biased stretch (basic and acidic residues) spans 851-862; sequence LRRENSSDSPKE. The span at 936–948 shows a compositional bias: polar residues; it reads ALDSVSPCPSSPK. Positions 950-960 are enriched in basic and acidic residues; the sequence is IHLDVDNDRTT. The span at 961–972 shows a compositional bias: polar residues; sequence PSDLDSTGNSLN. The interval 1051–1073 is polybasic cluster (PBR); it reads KHGFSWAVPKFMKRIKVPDYKDR. The 207-residue stretch at 1078–1284 folds into the Rho-GAP domain; that stretch reads VPLTVNVQRT…HMIAECKKLF (207 aa). An START domain is found at 1314–1521; that stretch reads GNDDSADYQH…RDSFSNQNTE (208 aa).

In terms of assembly, interacts with EF1A1, facilitates EF1A1 distribution to the membrane periphery and ruffles upon growth factor stimulation and suppresses cell migration. Interacts with tensin TNS1 (via N-terminus); the interaction is decreased by phosphorylation of TNS1. Interacts with TNS3 and PTEN; in resting cells, interacts with TNS3 (via C2 tensin-type domain) but, following growth factor stimulation, TNS3 and PTEN are phosphorylated which leads to weakened interaction with TNS3 and enhanced interaction with PTEN. Interacts (via C-terminus) with tensin TNS4 (via SH2 domain); the interaction is independent of tyrosine phosphorylation of DLC1. In terms of tissue distribution, highest level of expression in the spleen, with rather lower levels in prostate, testis, ovary, small intestine and colon, but none in the thymus.

Its subcellular location is the cytoplasm. It localises to the cell junction. The protein resides in the focal adhesion. It is found in the membrane. Its function is as follows. Functions as a GTPase-activating protein for the small GTPases RHOA, RHOB, RHOC and CDC42, terminating their downstream signaling. This induces morphological changes and detachment through cytoskeletal reorganization, playing a critical role in biological processes such as cell migration and proliferation. Also functions in vivo as an activator of the phospholipase PLCD1. Active DLC1 increases cell migration velocity but reduces directionality. Required for growth factor-induced epithelial cell migration; in resting cells, interacts with TNS3 while PTEN interacts with the p85 regulatory subunit of the PI3K kinase complex but growth factor stimulation induces phosphorylation of TNS3 and PTEN, causing them to change their binding preference so that PTEN interacts with DLC1 and TNS3 interacts with p85. The PTEN-DLC1 complex translocates to the posterior of migrating cells to activate RHOA while the TNS3-p85 complex translocates to the leading edge of migrating cells to promote RAC1 activation. This Homo sapiens (Human) protein is Rho GTPase-activating protein 7 (DLC1).